Consider the following 833-residue polypeptide: 3-hydroxy-3-methylglutaryl-coenzyme A reductase (833 aa).

4 helical membrane-spanning segments follow: residues 10 to 32 (FCARHQWEVIVATLALLACAASV), 91 to 117 (YLLIIAGVFSTFASFIFTSAVASLFWS), 160 to 180 (LALLGPTATLDTLLAVLLVGV), and 301 to 321 (SADYIVIATLLCALIIKFVFF). The segment at 322 to 419 (EEQRNWVIDM…EEVVMLVEQS (98 aa)) is linker. Positions 347-374 (KPKFSVGDDSNSEVSTQTEGVLEDEWPT) are disordered. Positions 354 to 365 (DDSNSEVSTQTE) are enriched in polar residues. The segment at 420-833 (HIPLHRLEAV…ENITLKVPTL (414 aa)) is catalytic. Catalysis depends on charge relay system residues glutamate 504 and lysine 635. Asparagine 680 carries N-linked (GlcNAc...) asparagine glycosylation. Aspartate 711 serves as the catalytic Charge relay system. Asparagine 715 and asparagine 720 each carry an N-linked (GlcNAc...) asparagine glycan. Histidine 809 functions as the Proton donor in the catalytic mechanism. 2 N-linked (GlcNAc...) asparagine glycosylation sites follow: asparagine 813 and asparagine 825.

It belongs to the HMG-CoA reductase family.

Its subcellular location is the endoplasmic reticulum membrane. It carries out the reaction (R)-mevalonate + 2 NADP(+) + CoA = (3S)-3-hydroxy-3-methylglutaryl-CoA + 2 NADPH + 2 H(+). Its pathway is metabolic intermediate biosynthesis; (R)-mevalonate biosynthesis; (R)-mevalonate from acetyl-CoA: step 3/3. With respect to regulation, the activity of HMG-CoA-reductase is suppressed by exogenous mevalonate. Its function is as follows. Synthesis of mevalonate for the production of non-sterol isoprenoids, which are essential for growth differentiation. This chain is 3-hydroxy-3-methylglutaryl-coenzyme A reductase (HMGR), found in Agrotis ipsilon (Black cutworm moth).